Reading from the N-terminus, the 1018-residue chain is Serine/threonine-protein kinase 31 (1018 aa).

A Tudor domain is found at 78-137 (NLDPKKIYGGLFSEDKCWYRCKVLKTISDDKCLVRYIDYGNTEILNRSDIVEIPPELQFS). Residues 298 to 358 (AKIKQDQKLI…TKHLESTLKT (61 aa)) are a coiled coil. Residues 711–1018 (IGLLKYMNSG…EKTRNGEANP (308 aa)) form the Protein kinase domain. ATP-binding positions include 717 to 725 (MNSGGLLTM) and Lys738. The segment at 988-1018 (IECTQHSREDESKMESLDRYSEKTRNGEANP) is disordered.

It belongs to the protein kinase superfamily. Ser/Thr protein kinase family. In terms of tissue distribution, testis specific. Expressed only in male germ cells.

It carries out the reaction L-seryl-[protein] + ATP = O-phospho-L-seryl-[protein] + ADP + H(+). The catalysed reaction is L-threonyl-[protein] + ATP = O-phospho-L-threonyl-[protein] + ADP + H(+). The polypeptide is Serine/threonine-protein kinase 31 (Stk31) (Mus musculus (Mouse)).